A 271-amino-acid chain; its full sequence is Putative phosphoenolpyruvate synthase regulatory protein (271 aa).

ADP is bound at residue 152–159 (GVSRSGKT).

It belongs to the pyruvate, phosphate/water dikinase regulatory protein family. PSRP subfamily.

It carries out the reaction [pyruvate, water dikinase] + ADP = [pyruvate, water dikinase]-phosphate + AMP + H(+). The catalysed reaction is [pyruvate, water dikinase]-phosphate + phosphate + H(+) = [pyruvate, water dikinase] + diphosphate. In terms of biological role, bifunctional serine/threonine kinase and phosphorylase involved in the regulation of the phosphoenolpyruvate synthase (PEPS) by catalyzing its phosphorylation/dephosphorylation. This is Putative phosphoenolpyruvate synthase regulatory protein from Thiocapsa roseopersicina.